An 843-amino-acid polypeptide reads, in one-letter code: Protein P (843 aa).

Residues 1-177 form a terminal protein domain (TP) region; it reads MPLSYQHFRR…FCGSPYSWEQ (177 aa). Residues 178–346 form a spacer region; sequence ELQHGSTSLN…YCLSHIINLL (169 aa). The segment at 249–301 is disordered; the sequence is TPTRWPSGVEPSGTGHSDNLATRSTSRFHQSEVRKETNPSLSTSKGHTSTGHA. 2 stretches are compositionally biased toward polar residues: residues 262–276 and 286–299; these read TGHS…TSRF and NPSL…TSTG. Residues 347–690 are polymerase/reverse transcriptase domain (RT); it reads EDWGPCYEHG…YMNLYPVARQ (344 aa). Residues 357-600 enclose the Reverse transcriptase domain; the sequence is EHHIRTPRTP…YSLHFMGYII (244 aa). Mg(2+) contacts are provided by D429, D551, and D552.

It belongs to the hepadnaviridae P protein family.

The enzyme catalyses DNA(n) + a 2'-deoxyribonucleoside 5'-triphosphate = DNA(n+1) + diphosphate. The catalysed reaction is Endonucleolytic cleavage to 5'-phosphomonoester.. Activated by host HSP70 and HSP40 in vitro to be able to bind the epsilon loop of the pgRNA. Because deletion of the RNase H region renders the protein partly chaperone-independent, the chaperones may be needed indirectly to relieve occlusion of the RNA-binding site by this domain. Inhibited by several reverse-transcriptase inhibitors: Lamivudine, Adefovir and Entecavir. In terms of biological role, multifunctional enzyme that converts the viral RNA genome into dsDNA in viral cytoplasmic capsids. This enzyme displays a DNA polymerase activity that can copy either DNA or RNA templates, and a ribonuclease H (RNase H) activity that cleaves the RNA strand of RNA-DNA heteroduplexes in a partially processive 3'- to 5'-endonucleasic mode. Neo-synthesized pregenomic RNA (pgRNA) are encapsidated together with the P protein, and reverse-transcribed inside the nucleocapsid. Initiation of reverse-transcription occurs first by binding the epsilon loop on the pgRNA genome, and is initiated by protein priming, thereby the 5'-end of (-)DNA is covalently linked to P protein. Partial (+)DNA is synthesized from the (-)DNA template and generates the relaxed circular DNA (RC-DNA) genome. After budding and infection, the RC-DNA migrates in the nucleus, and is converted into a plasmid-like covalently closed circular DNA (cccDNA). The activity of P protein does not seem to be necessary for cccDNA generation, and is presumably released from (+)DNA by host nuclear DNA repair machinery. This is Protein P from Homo sapiens (Human).